The chain runs to 311 residues: MAATGTEAKDLENHHNDCFIQLSNPNIAAMKEDVLYHFNLSTSTHDFPAMFGDVKFVCVGGSSSRMNTFIKYVAAELGLDHPGKEYPNICAGTDRYAMYKAGPVLSVSHGMGIPSIGIMLHELIKMLYHARCSNITIIRIGTSGGIGLEPGSVVITQQAVNECFKPEFEQIVLGKRVIRNTNLDAQLVQELVQCSSDLNEFPMVVGNTMCTLDFYEGQGRLDGALCSYTEKDKQSYLRAAHAAGVRNIEMESSVFATMCSACGLKAAVVCVTLLDRLQGDQINTPHDVLVEYQQRPQRLVGHFIKKSLGRA.

Phosphate is bound by residues G61, R95, and 139–142; that span reads RIGT. Uridine-binding positions include 143 to 144 and 218 to 220; these read SG and QGR.

The protein belongs to the PNP/UDP phosphorylase family. Homodimer. Post-translationally, the N-terminus is blocked.

The enzyme catalyses uridine + phosphate = alpha-D-ribose 1-phosphate + uracil. The catalysed reaction is 2'-deoxyuridine + phosphate = 2-deoxy-alpha-D-ribose 1-phosphate + uracil. It participates in pyrimidine metabolism; UMP biosynthesis via salvage pathway; uracil from uridine (phosphorylase route): step 1/1. Strongly inhibited by 2,2'-anhydro-5-ethyluridine, a competitive inhibitor. In terms of biological role, catalyzes the reversible phosphorylytic cleavage of uridine to uracil and ribose-1-phosphate which can then be utilized as carbon and energy sources or in the rescue of pyrimidine bases for nucleotide synthesis. Shows broad substrate specificity and can also accept deoxyuridine and other analogous compounds. The protein is Uridine phosphorylase 1 of Mus musculus (Mouse).